Reading from the N-terminus, the 342-residue chain is NADH-quinone oxidoreductase subunit H (342 aa).

The next 8 helical transmembrane spans lie at 15-35 (LLIITALQALAILVPLMLMVA), 86-106 (VLFILAPLLTFILAMIAWAVV), 119-139 (VGVLYLFAISSLGVYGVIIAG), 159-179 (VSYEVSIGFVMVAILLCVGSL), 190-210 (HVWFVLPMLPMAVIFFISGLA), 251-271 (FMICAMTTLLFLGGWLPPFDI), 277-297 (VPGPIWFVLKVCALMFVFFWV), and 316-336 (VFLPFSLVWLLLTACVLELAG).

The protein belongs to the complex I subunit 1 family. NDH-1 is composed of 14 different subunits. Subunits NuoA, H, J, K, L, M, N constitute the membrane sector of the complex.

The protein localises to the cell inner membrane. The enzyme catalyses a quinone + NADH + 5 H(+)(in) = a quinol + NAD(+) + 4 H(+)(out). Functionally, NDH-1 shuttles electrons from NADH, via FMN and iron-sulfur (Fe-S) centers, to quinones in the respiratory chain. The immediate electron acceptor for the enzyme in this species is believed to be ubiquinone. Couples the redox reaction to proton translocation (for every two electrons transferred, four hydrogen ions are translocated across the cytoplasmic membrane), and thus conserves the redox energy in a proton gradient. This subunit may bind ubiquinone. In Granulibacter bethesdensis (strain ATCC BAA-1260 / CGDNIH1), this protein is NADH-quinone oxidoreductase subunit H.